Here is a 355-residue protein sequence, read N- to C-terminus: Sulfate/thiosulfate import ATP-binding protein CysA (355 aa).

The ABC transporter domain maps to I3–I233. G35–S42 serves as a coordination point for ATP.

Belongs to the ABC transporter superfamily. Sulfate/tungstate importer (TC 3.A.1.6) family. The complex is composed of two ATP-binding proteins (CysA), two transmembrane proteins (CysT and CysW) and a solute-binding protein (CysP).

The protein resides in the cell inner membrane. The catalysed reaction is sulfate(out) + ATP + H2O = sulfate(in) + ADP + phosphate + H(+). It catalyses the reaction thiosulfate(out) + ATP + H2O = thiosulfate(in) + ADP + phosphate + H(+). Its function is as follows. Part of the ABC transporter complex CysAWTP involved in sulfate/thiosulfate import. Responsible for energy coupling to the transport system. The protein is Sulfate/thiosulfate import ATP-binding protein CysA of Synechocystis sp. (strain ATCC 27184 / PCC 6803 / Kazusa).